A 187-amino-acid chain; its full sequence is Meiotically up-regulated protein C1442.13c (187 aa).

Disordered regions lie at residues 15–46 (QWEN…LSNE) and 119–145 (IQEG…PAIN). The segment covering 26–41 (PPRKPKIVQPKKKPSK) has biased composition (basic residues). Positions 145–187 (NNGKGKQLLEMMGWSRGKGLGSENQGMVDPVVAVVKNNKQGLH) constitute a G-patch domain.

It is found in the nucleus. Its subcellular location is the cytoplasm. The protein localises to the cytoskeleton. It localises to the microtubule organizing center. The protein resides in the spindle pole body. Has a role in meiosis and sporulation. Required for meiotic chromosome segregation. This Schizosaccharomyces pombe (strain 972 / ATCC 24843) (Fission yeast) protein is Meiotically up-regulated protein C1442.13c.